Here is a 215-residue protein sequence, read N- to C-terminus: Cytochrome b6 (215 aa).

Residues 32-52 (IFYCLGGVTLVCFIIQFATGF) traverse the membrane as a helical segment. C35 is a heme c binding site. H86 and H100 together coordinate heme b. The next 3 membrane-spanning stretches (helical) occupy residues 90-110 (ASMM…TGGF), 116-136 (LTWI…VTGY), and 186-206 (LHTF…FLMI). Residues H187 and H202 each coordinate heme b.

This sequence belongs to the cytochrome b family. PetB subfamily. As to quaternary structure, the 4 large subunits of the cytochrome b6-f complex are cytochrome b6, subunit IV (17 kDa polypeptide, PetD), cytochrome f and the Rieske protein, while the 4 small subunits are PetG, PetL, PetM and PetN. The complex functions as a dimer. Heme b is required as a cofactor. The cofactor is heme c.

The protein resides in the cellular thylakoid membrane. Functionally, component of the cytochrome b6-f complex, which mediates electron transfer between photosystem II (PSII) and photosystem I (PSI), cyclic electron flow around PSI, and state transitions. The polypeptide is Cytochrome b6 (Acaryochloris marina (strain MBIC 11017)).